A 205-amino-acid chain; its full sequence is Regulatory protein RecX (205 aa).

This sequence belongs to the RecX family.

It is found in the cytoplasm. In terms of biological role, modulates RecA activity. This is Regulatory protein RecX from Finegoldia magna (strain ATCC 29328 / DSM 20472 / WAL 2508) (Peptostreptococcus magnus).